We begin with the raw amino-acid sequence, 105 residues long: Large ribosomal subunit protein uL24 (105 aa).

This sequence belongs to the universal ribosomal protein uL24 family. Part of the 50S ribosomal subunit.

Functionally, one of two assembly initiator proteins, it binds directly to the 5'-end of the 23S rRNA, where it nucleates assembly of the 50S subunit. One of the proteins that surrounds the polypeptide exit tunnel on the outside of the subunit. This Vibrio campbellii (strain ATCC BAA-1116) protein is Large ribosomal subunit protein uL24.